The primary structure comprises 400 residues: Laminin subunit B (400 aa).

Laminin EGF-like domains lie at 1–5 (EGCKP), 6–53 (CECD…GCKS), and 54–100 (CTCN…QCIP). Disulfide bonds link cysteine 6–cysteine 18, cysteine 8–cysteine 25, cysteine 27–cysteine 36, cysteine 39–cysteine 51, cysteine 54–cysteine 66, cysteine 56–cysteine 73, cysteine 75–cysteine 84, and cysteine 87–cysteine 98. The segment at 101–400 (CGECFDNWDK…AEAKNNAHEA (300 aa)) is domain II and I. Residues 140–235 (KEFEELEQVL…RENALEIQEQ (96 aa)) adopt a coiled-coil conformation. N-linked (GlcNAc...) asparagine glycans are attached at residues asparagine 160, asparagine 175, asparagine 216, asparagine 266, asparagine 283, asparagine 310, and asparagine 356. Positions 353 to 400 (EAKNTSRKAEELIKSKYRSTSSTLSELENSNKQCKQATAEAKNNAHEA) form a coiled coil. The segment at 369–400 (YRSTSSTLSELENSNKQCKQATAEAKNNAHEA) is disordered. Positions 371–383 (STSSTLSELENSN) are enriched in low complexity.

In terms of assembly, laminin is a complex glycoprotein, consisting of three different polypeptide chains (alpha, beta, gamma), which are bound to each other by disulfide bonds into a cross-shaped molecule comprising one long and three short arms with globules at each end. In terms of tissue distribution, individual glial and muscle cells.

Its subcellular location is the secreted. The protein resides in the extracellular space. The protein localises to the extracellular matrix. Functionally, binding to cells via a high affinity receptor, laminin is thought to mediate the attachment, migration and organization of cells into tissues during embryonic development by interacting with other extracellular matrix components. The sequence is that of Laminin subunit B from Hirudo medicinalis (Medicinal leech).